Reading from the N-terminus, the 126-residue chain is Fluoride-specific ion channel FluC (126 aa).

4 helical membrane-spanning segments follow: residues 6–26 (FVAV…FAVL), 36–56 (YGTL…VGFF), 69–89 (LAIT…SEVV), and 99–119 (WAGL…AFGL). Na(+) contacts are provided by Gly76 and Thr79.

The protein belongs to the fluoride channel Fluc/FEX (TC 1.A.43) family.

Its subcellular location is the cell inner membrane. It carries out the reaction fluoride(in) = fluoride(out). With respect to regulation, na(+) is not transported, but it plays an essential structural role and its presence is essential for fluoride channel function. In terms of biological role, fluoride-specific ion channel. Important for reducing fluoride concentration in the cell, thus reducing its toxicity. The protein is Fluoride-specific ion channel FluC of Cupriavidus necator (strain ATCC 17699 / DSM 428 / KCTC 22496 / NCIMB 10442 / H16 / Stanier 337) (Ralstonia eutropha).